The chain runs to 142 residues: Small heat shock protein IbpB (142 aa).

Residues 26-137 (SGESQSFPPY…PPQRIAINER (112 aa)) form the sHSP domain.

The protein belongs to the small heat shock protein (HSP20) family. In terms of assembly, homodimer. Forms homomultimers of about 100-150 subunits at optimal growth temperatures. Conformation changes to oligomers at high temperatures or high ionic concentrations. The decrease in size of the multimers is accompanied by an increase in chaperone activity.

It localises to the cytoplasm. Its function is as follows. Associates with aggregated proteins, together with IbpA, to stabilize and protect them from irreversible denaturation and extensive proteolysis during heat shock and oxidative stress. Aggregated proteins bound to the IbpAB complex are more efficiently refolded and reactivated by the ATP-dependent chaperone systems ClpB and DnaK/DnaJ/GrpE. Its activity is ATP-independent. The polypeptide is Small heat shock protein IbpB (Salmonella typhi).